We begin with the raw amino-acid sequence, 199 residues long: dITP/XTP pyrophosphatase (199 aa).

A substrate-binding site is contributed by 7-12; the sequence is TSNRGK. The Proton acceptor role is filled by D74. Mg(2+) is bound at residue D74. Substrate is bound by residues S75, 156–159, K179, and 184–185; these read FGYD and HR.

It belongs to the HAM1 NTPase family. Homodimer. Requires Mg(2+) as cofactor.

It catalyses the reaction XTP + H2O = XMP + diphosphate + H(+). The enzyme catalyses dITP + H2O = dIMP + diphosphate + H(+). The catalysed reaction is ITP + H2O = IMP + diphosphate + H(+). Pyrophosphatase that catalyzes the hydrolysis of nucleoside triphosphates to their monophosphate derivatives, with a high preference for the non-canonical purine nucleotides XTP (xanthosine triphosphate), dITP (deoxyinosine triphosphate) and ITP. Seems to function as a house-cleaning enzyme that removes non-canonical purine nucleotides from the nucleotide pool, thus preventing their incorporation into DNA/RNA and avoiding chromosomal lesions. This chain is dITP/XTP pyrophosphatase, found in Sulfurimonas denitrificans (strain ATCC 33889 / DSM 1251) (Thiomicrospira denitrificans (strain ATCC 33889 / DSM 1251)).